The following is a 66-amino-acid chain: MPKMKTKSGAKKRFRLTGTGKVIAGQAGKRHGMIKRTNKTIRNQRGTNILCESDGRIIRKSFLPNG.

This sequence belongs to the bacterial ribosomal protein bL35 family.

The chain is Large ribosomal subunit protein bL35 from Azorhizobium caulinodans (strain ATCC 43989 / DSM 5975 / JCM 20966 / LMG 6465 / NBRC 14845 / NCIMB 13405 / ORS 571).